Reading from the N-terminus, the 457-residue chain is Adenylosuccinate synthetase isozyme 2 B (457 aa).

Residues 40–46 and 68–70 each bind GTP; these read GDEGKGK and GHT. Asp41 acts as the Proton acceptor in catalysis. Mg(2+)-binding residues include Asp41 and Gly68. Asp41 serves as a coordination point for substrate. IMP contacts are provided by residues 41-44, 66-69, Thr163, Arg177, Asn256, Thr271, and Arg335; these read DEGK and NAGH. Residue His69 is the Proton donor of the active site. 331–337 contributes to the substrate binding site; the sequence is VTTGRKR. Residues Arg337, 363-365, and 445-448 each bind GTP; these read KLD and GVGK.

The protein belongs to the adenylosuccinate synthetase family. In terms of assembly, homodimer. It depends on Mg(2+) as a cofactor.

Its subcellular location is the cytoplasm. The protein resides in the mitochondrion. It catalyses the reaction IMP + L-aspartate + GTP = N(6)-(1,2-dicarboxyethyl)-AMP + GDP + phosphate + 2 H(+). It functions in the pathway purine metabolism; AMP biosynthesis via de novo pathway; AMP from IMP: step 1/2. Inhibited competitively by AMP and IMP and non-competitively by fructose 1,6-bisphosphate. Functionally, plays an important role in the de novo pathway and in the salvage pathway of purine nucleotide biosynthesis. Catalyzes the first committed step in the biosynthesis of AMP from IMP. This chain is Adenylosuccinate synthetase isozyme 2 B (adss2-b), found in Xenopus tropicalis (Western clawed frog).